A 236-amino-acid chain; its full sequence is Concanavalin-Ma (236 aa).

Mn(2+) is bound by residues Glu-8 and Asp-10. Ca(2+) contacts are provided by Asp-10, Tyr-12, Asn-14, and Asp-19. Position 12 (Tyr-12) interacts with a carbohydrate. Mn(2+) contacts are provided by Asp-19 and His-24. Position 98-99 (98-99 (LY)) interacts with a carbohydrate. Asp-207 serves as a coordination point for Ca(2+). Residue Arg-227 participates in a carbohydrate binding.

It belongs to the leguminous lectin family. In terms of assembly, homotetramer.

In terms of biological role, glucose/D-mannose specific lectin. This chain is Concanavalin-Ma, found in Canavalia rosea (Beach bean).